A 216-amino-acid polypeptide reads, in one-letter code: Probable GTP-binding protein EngB (216 aa).

Residues 30–204 (SGLEVAFAGR…QMVLAGWLDL (175 aa)) enclose the EngB-type G domain. GTP contacts are provided by residues 38–45 (GRSNAGKS), 64–68 (GRTQL), 82–85 (DLPG), 149–152 (TKAD), and 182–185 (LFSA). 2 residues coordinate Mg(2+): Ser-45 and Thr-66.

Belongs to the TRAFAC class TrmE-Era-EngA-EngB-Septin-like GTPase superfamily. EngB GTPase family. Requires Mg(2+) as cofactor.

Functionally, necessary for normal cell division and for the maintenance of normal septation. This chain is Probable GTP-binding protein EngB, found in Ectopseudomonas mendocina (strain ymp) (Pseudomonas mendocina).